A 258-amino-acid polypeptide reads, in one-letter code: Large ribosomal subunit protein eL8z (258 aa).

Positions 1–20 are disordered; that stretch reads MAPKRGGRAPVPAKKKTEKV.

It belongs to the eukaryotic ribosomal protein eL8 family.

This is Large ribosomal subunit protein eL8z (RPL7A-1) from Oryza sativa subsp. japonica (Rice).